Here is a 235-residue protein sequence, read N- to C-terminus: Large ribosomal subunit protein uL1 (235 aa).

It belongs to the universal ribosomal protein uL1 family. Part of the 50S ribosomal subunit.

Binds directly to 23S rRNA. The L1 stalk is quite mobile in the ribosome, and is involved in E site tRNA release. Its function is as follows. Protein L1 is also a translational repressor protein, it controls the translation of the L11 operon by binding to its mRNA. This chain is Large ribosomal subunit protein uL1, found in Renibacterium salmoninarum (strain ATCC 33209 / DSM 20767 / JCM 11484 / NBRC 15589 / NCIMB 2235).